We begin with the raw amino-acid sequence, 291 residues long: Glutamate racemase (291 aa).

Substrate is bound by residues 12–13 (DS) and 44–45 (YG). Cys-75 serves as the catalytic Proton donor/acceptor. 76-77 (NT) is a substrate binding site. Cys-187 (proton donor/acceptor) is an active-site residue. 188–189 (TH) lines the substrate pocket. The span at 234–247 (ATQAAGARAQMAPS) shows a compositional bias: low complexity. The segment at 234-257 (ATQAAGARAQMAPSAPEPKEGTPD) is disordered.

The protein belongs to the aspartate/glutamate racemases family.

It carries out the reaction L-glutamate = D-glutamate. The protein operates within cell wall biogenesis; peptidoglycan biosynthesis. Provides the (R)-glutamate required for cell wall biosynthesis. The protein is Glutamate racemase of Koribacter versatilis (strain Ellin345).